A 360-amino-acid polypeptide reads, in one-letter code: DnaJ homolog subfamily C member 25 (360 aa).

A helical transmembrane segment spans residues 20–40 (WMLLAPLLPALLLVRPAGALV). Residues 49-124 (DCYEVLGVSR…ETRKDYDYML (76 aa)) form the J domain. The next 2 membrane-spanning stretches (helical) occupy residues 150-170 (VVILVSVCAISVFQFFSWWNS) and 244-264 (LLLFQIILAPFHLCSYIVWYC).

The protein belongs to the DNAJC25 family.

Its subcellular location is the membrane. This chain is DnaJ homolog subfamily C member 25 (DNAJC25), found in Homo sapiens (Human).